We begin with the raw amino-acid sequence, 63 residues long: Cytochrome c oxidase subunit 7C, mitochondrial (63 aa).

The N-terminal 16 residues, 1–16, are a transit peptide targeting the mitochondrion; it reads MWGQGVRRFTTSVVRR. Over 17-33 the chain is Mitochondrial matrix; it reads SHYEEGPGKNLPFSVEN. Lysine 25 bears the N6-acetyllysine; alternate mark. Lysine 25 carries the N6-succinyllysine; alternate modification. A helical membrane pass occupies residues 34–60; sequence KWRLLAMMTLYLGSGFAAPFFIVRHQL. Residues 61 to 63 lie on the Mitochondrial intermembrane side of the membrane; sequence LKK.

The protein belongs to the cytochrome c oxidase VIIc family. As to quaternary structure, component of the cytochrome c oxidase (complex IV, CIV), a multisubunit enzyme composed of 14 subunits. The complex is composed of a catalytic core of 3 subunits MT-CO1, MT-CO2 and MT-CO3, encoded in the mitochondrial DNA, and 11 supernumerary subunits COX4I, COX5A, COX5B, COX6A, COX6B, COX6C, COX7A, COX7B, COX7C, COX8 and NDUFA4, which are encoded in the nuclear genome. The complex exists as a monomer or a dimer and forms supercomplexes (SCs) in the inner mitochondrial membrane with NADH-ubiquinone oxidoreductase (complex I, CI) and ubiquinol-cytochrome c oxidoreductase (cytochrome b-c1 complex, complex III, CIII), resulting in different assemblies (supercomplex SCI(1)III(2)IV(1) and megacomplex MCI(2)III(2)IV(2)). Interacts with RAB5IF.

Its subcellular location is the mitochondrion inner membrane. It participates in energy metabolism; oxidative phosphorylation. In terms of biological role, component of the cytochrome c oxidase, the last enzyme in the mitochondrial electron transport chain which drives oxidative phosphorylation. The respiratory chain contains 3 multisubunit complexes succinate dehydrogenase (complex II, CII), ubiquinol-cytochrome c oxidoreductase (cytochrome b-c1 complex, complex III, CIII) and cytochrome c oxidase (complex IV, CIV), that cooperate to transfer electrons derived from NADH and succinate to molecular oxygen, creating an electrochemical gradient over the inner membrane that drives transmembrane transport and the ATP synthase. Cytochrome c oxidase is the component of the respiratory chain that catalyzes the reduction of oxygen to water. Electrons originating from reduced cytochrome c in the intermembrane space (IMS) are transferred via the dinuclear copper A center (CU(A)) of subunit 2 and heme A of subunit 1 to the active site in subunit 1, a binuclear center (BNC) formed by heme A3 and copper B (CU(B)). The BNC reduces molecular oxygen to 2 water molecules using 4 electrons from cytochrome c in the IMS and 4 protons from the mitochondrial matrix. The sequence is that of Cytochrome c oxidase subunit 7C, mitochondrial (COX7C) from Carlito syrichta (Philippine tarsier).